A 247-amino-acid chain; its full sequence is Myelin-oligodendrocyte glycoprotein (247 aa).

An N-terminal signal peptide occupies residues 1–29 (MASLSRPSLPSCLCSFLLLLLLQVSSSYA). Over 30 to 154 (GQFRVIGPRQ…EDPFYWVSPA (125 aa)) the chain is Extracellular. The region spanning 31–145 (QFRVIGPRQP…EEAAIELKVE (115 aa)) is the Ig-like V-type domain. Cysteines 53 and 127 form a disulfide. N-linked (GlcNAc...) asparagine glycosylation is present at N60. A helical membrane pass occupies residues 155–175 (VLVLLAVLPVLLLQITVGLVF). Residues 176–210 (LCLQYRLRGKLRAEIENLHRTFDPHFLRVPCWKIT) are Cytoplasmic-facing. A helical transmembrane segment spans residues 211-231 (LFVIVPVLGPLVALIICYNWL). Residues 232–247 (HRRLAGQFLEELRNPF) are Extracellular-facing.

The protein belongs to the immunoglobulin superfamily. BTN/MOG family. Homodimer.

Its subcellular location is the membrane. Functionally, minor component of the myelin sheath. May be involved in completion and/or maintenance of the myelin sheath and in cell-cell communication. Mediates homophilic cell-cell adhesion. This chain is Myelin-oligodendrocyte glycoprotein (MOG), found in Macaca fascicularis (Crab-eating macaque).